We begin with the raw amino-acid sequence, 349 residues long: MRKIIHIDCDCFYAALEMRDDPSLRGKALAVGGSPDKRGVVATCSYEARAYGVRSAMAMRTALKLCPDLLVVRPRFDVYRAVSKQIHAIFRDYTDLIEPLSLDEAYLDVSASPHFAGSATRIAQDIRRRVAEELHITVSAGVAPNKFLAKIASDWRKPDGLFVITPEQVDGFVAELPVAKLHGVGKVTAERLARMGIRTCADLRQGSKLSLVREFGSFGERLWGLAHGIDERPVEVDSRRQSVSVECTFDRDLPDLAACLEELPTLLEELDGRLQRLDGSYRPDKPFVKLKFHDFTQTTVEQSGAGRDLESYRQLLGQAFARGNRPVRLIGVGVRLLDLQGAHEQLRLF.

The 182-residue stretch at isoleucine 4–glycine 185 folds into the UmuC domain. Mg(2+)-binding residues include aspartate 8 and aspartate 103. Glutamate 104 is an active-site residue.

The protein belongs to the DNA polymerase type-Y family. As to quaternary structure, monomer. Mg(2+) serves as cofactor.

It is found in the cytoplasm. The enzyme catalyses DNA(n) + a 2'-deoxyribonucleoside 5'-triphosphate = DNA(n+1) + diphosphate. Poorly processive, error-prone DNA polymerase involved in untargeted mutagenesis. Copies undamaged DNA at stalled replication forks, which arise in vivo from mismatched or misaligned primer ends. These misaligned primers can be extended by PolIV. Exhibits no 3'-5' exonuclease (proofreading) activity. May be involved in translesional synthesis, in conjunction with the beta clamp from PolIII. The sequence is that of DNA polymerase IV from Pseudomonas aeruginosa (strain UCBPP-PA14).